Here is a 151-residue protein sequence, read N- to C-terminus: Transcriptional regulator MraZ (151 aa).

SpoVT-AbrB domains follow at residues 5–52 and 81–124; these read ANAV…PLDE and AVDL…DEDA.

This sequence belongs to the MraZ family. Forms oligomers.

It is found in the cytoplasm. Its subcellular location is the nucleoid. The sequence is that of Transcriptional regulator MraZ from Pseudomonas putida (strain ATCC 700007 / DSM 6899 / JCM 31910 / BCRC 17059 / LMG 24140 / F1).